Consider the following 274-residue polypeptide: tRNA-cytidine(32) 2-sulfurtransferase (274 aa).

Positions 40 to 45 match the PP-loop motif motif; the sequence is SGGKDS. The [4Fe-4S] cluster site is built by cysteine 115, cysteine 118, and cysteine 206.

The protein belongs to the TtcA family. As to quaternary structure, homodimer. The cofactor is Mg(2+). Requires [4Fe-4S] cluster as cofactor.

Its subcellular location is the cytoplasm. It carries out the reaction cytidine(32) in tRNA + S-sulfanyl-L-cysteinyl-[cysteine desulfurase] + AH2 + ATP = 2-thiocytidine(32) in tRNA + L-cysteinyl-[cysteine desulfurase] + A + AMP + diphosphate + H(+). The protein operates within tRNA modification. In terms of biological role, catalyzes the ATP-dependent 2-thiolation of cytidine in position 32 of tRNA, to form 2-thiocytidine (s(2)C32). The sulfur atoms are provided by the cysteine/cysteine desulfurase (IscS) system. This is tRNA-cytidine(32) 2-sulfurtransferase from Pseudomonas fluorescens (strain SBW25).